The chain runs to 136 residues: uncharacterized protein (136 aa).

Residues 19–39 (LGFPLGTALLLIIIFSLSGIF) form a helical membrane-spanning segment. Disordered stretches follow at residues 54–87 (SLAN…LSVP) and 112–136 (KLTV…VPLY).

It is found in the membrane. This is an uncharacterized protein from Arabidopsis thaliana (Mouse-ear cress).